The primary structure comprises 249 residues: 5'-nucleotidase SurE (249 aa).

Positions 8, 9, 39, and 91 each coordinate a divalent metal cation.

The protein belongs to the SurE nucleotidase family. It depends on a divalent metal cation as a cofactor.

The protein localises to the cytoplasm. The catalysed reaction is a ribonucleoside 5'-phosphate + H2O = a ribonucleoside + phosphate. Functionally, nucleotidase that shows phosphatase activity on nucleoside 5'-monophosphates. In Haemophilus influenzae (strain 86-028NP), this protein is 5'-nucleotidase SurE.